The sequence spans 354 residues: Type II methylase M.HgiDII (354 aa).

An SAM-dependent MTase C5-type domain is found at 3–344 (GAVIDLFCGV…KSIKRFLEGL (342 aa)). C79 is an active-site residue.

The protein belongs to the class I-like SAM-binding methyltransferase superfamily. C5-methyltransferase family.

It carries out the reaction a 2'-deoxycytidine in DNA + S-adenosyl-L-methionine = a 5-methyl-2'-deoxycytidine in DNA + S-adenosyl-L-homocysteine + H(+). A methylase that recognizes the double-stranded sequence 5'-GTCGAC-3', methylates C-? on both strands and protects the DNA from cleavage by the HgiDII endonuclease. The sequence is that of Type II methylase M.HgiDII from Herpetosiphon aurantiacus (Herpetosiphon giganteus).